The primary structure comprises 70 residues: Sec-independent protein translocase protein TatA (70 aa).

The chain crosses the membrane as a helical span at residues 1–21; sequence MGSFSIWHWLIVLVVVLLIFG. Positions 46–70 are disordered; that stretch reads DAPKISESDKGGHTIDAEVKDKQNS.

The protein belongs to the TatA/E family. The Tat system comprises two distinct complexes: a TatABC complex, containing multiple copies of TatA, TatB and TatC subunits, and a separate TatA complex, containing only TatA subunits. Substrates initially bind to the TatABC complex, which probably triggers association of the separate TatA complex to form the active translocon.

Its subcellular location is the cell inner membrane. Its function is as follows. Part of the twin-arginine translocation (Tat) system that transports large folded proteins containing a characteristic twin-arginine motif in their signal peptide across membranes. TatA could form the protein-conducting channel of the Tat system. This is Sec-independent protein translocase protein TatA from Thiobacillus denitrificans (strain ATCC 25259 / T1).